The chain runs to 205 residues: Guanylate kinase (205 aa).

In terms of domain architecture, Guanylate kinase-like spans 5-184 (GLLIVLSGPS…AVQKIKGIVE (180 aa)). Position 12–19 (12–19 (GPSGVGKG)) interacts with ATP.

The protein belongs to the guanylate kinase family.

Its subcellular location is the cytoplasm. The catalysed reaction is GMP + ATP = GDP + ADP. Essential for recycling GMP and indirectly, cGMP. The chain is Guanylate kinase from Listeria innocua serovar 6a (strain ATCC BAA-680 / CLIP 11262).